Reading from the N-terminus, the 372-residue chain is MAHAVRALWPHGRALAWRLGDRPALGLHAQSRAGFTGAAGGSGPAATARKGGPRLLGAAALALGGALGLYHTARWHLRAQDLRAERSATQLSLSSRLQLTLYQYKTCPFCSKVRAFLDFHALPYQVVEVNPVRRAEIKFSSYRKVPIVMAQEGESLQQLNDSSVIISALKTYLVSGQPLADIITYYPPMKAVNDQGKEVTEFCNKYWLMLDEKEAQRMYGGKEARTEEMKWRQWADDWLVHLISPNVYRTPAEALASFDYIVKEGNFGTVEGAMAKYMGAAAMYFISKRLKRRHHLRDDVREDLYEAANKWVAAVGKDRPFMGGQKPNLADLAVYGVLRVMEGLEAFDDLMRHTHIQPWYLRVEKAIAEAPQ.

The Lumenal segment spans residues 1–54; the sequence is MAHAVRALWPHGRALAWRLGDRPALGLHAQSRAGFTGAAGGSGPAATARKGGPR. Residues 55-71 form a helical membrane-spanning segment; that stretch reads LLGAAALALGGALGLYH. At 72–372 the chain is on the cytoplasmic side; it reads TARWHLRAQD…VEKAIAEAPQ (301 aa). A Glutaredoxin domain is found at 87-190; sequence SATQLSLSSR…DIITYYPPMK (104 aa). Phosphoserine is present on S92. Residues V145 and 161–162 contribute to the glutathione site; that span reads DS. In terms of domain architecture, GST C-terminal spans 259–372; that stretch reads DYIVKEGNFG…VEKAIAEAPQ (114 aa).

The protein belongs to the GST superfamily. As to quaternary structure, may interact with CEBPB. Interacts with EXOSC10. Homodimer. In terms of processing, synthesized as a Golgi membrane-associated protein, and the proteolytic removal of the N-terminal hydrophobic domain leads to the formation of a mature cytosolic enzyme. In terms of tissue distribution, detected in heart (at protein level). Widely expressed. Expressed in heart &gt; kidney &gt; muscle &gt; testis &gt; endometrium = ovary &gt; myometrium = spleen = lung. In endometrium, it is mainly expressed in luminal epithelial cells followed by glandular epithelial cells, but expression is also present in stromal cells at a lower level.

The protein localises to the microsome membrane. Its subcellular location is the cytoplasm. The enzyme catalyses prostaglandin H2 = prostaglandin E2. It carries out the reaction prostaglandin H2 = (12S)-hydroxy-(5Z,8E,10E)-heptadecatrienoate + malonaldehyde. It functions in the pathway lipid metabolism; prostaglandin biosynthesis. With respect to regulation, isomerase activity is increased by sulfhydril compounds. Dithiothreitol (DTT) is most effective, followed by glutathione (GSH) and 2-mercaptoethanol. Functionally, isomerase that catalyzes the conversion of PGH2 into the more stable prostaglandin E2 (PGE2) (in vitro). The biological function and the GSH-dependent property of PTGES2 is still under debate. In vivo, PTGES2 could form a complex with GSH and heme and would not participate in PGE2 synthesis but would catalyze the degradation of prostaglandin E2 H2 (PGH2) to 12(S)-hydroxy-5(Z),8(E),10(E)-heptadecatrienoic acid (HHT) and malondialdehyde (MDA). The polypeptide is Prostaglandin E synthase 2 (PTGES2) (Bos taurus (Bovine)).